A 561-amino-acid chain; its full sequence is Asparagine synthetase [glutamine-hydrolyzing] (561 aa).

Cys-2 (for GATase activity) is an active-site residue. Positions 2 to 191 (CGIWALFGSD…PGHYEVLDLK (190 aa)) constitute a Glutamine amidotransferase type-2 domain. Residues 49-53 (RLAVV), 75-77 (NGE), and Asp-97 contribute to the L-glutamine site. One can recognise an Asparagine synthetase domain in the interval 213–536 (HALYDNVEKL…PGRADWLSHY (324 aa)). Residues Leu-256, Ile-288, and 363–364 (SG) each bind ATP. Position 385 is an N6-acetyllysine (Lys-385). Phosphothreonine is present on Thr-545. At Ser-557 the chain carries Phosphoserine.

It catalyses the reaction L-aspartate + L-glutamine + ATP + H2O = L-asparagine + L-glutamate + AMP + diphosphate + H(+). It functions in the pathway amino-acid biosynthesis; L-asparagine biosynthesis; L-asparagine from L-aspartate (L-Gln route): step 1/1. This chain is Asparagine synthetase [glutamine-hydrolyzing] (ASNS), found in Pongo abelii (Sumatran orangutan).